The sequence spans 714 residues: MKITYCDALIIGGGLAGLRASIACKQKGLNTIVLSLVPVRRSHSAAAQGGMQASLANAKKSEGDNEDLHFLDTVKGSDWGCDQQVARMFVTTAPKAIRELASWGVPWTRIKKGDRPAVVNGEHVIITERDDRHGYILSRDFGGTKKWRTCFTADATGHTMLYAVANEALHHKVDIQDRKDMLAFIHHDNKCYGAVVRDLITGEISAYVSKGTLLATGGYGRVYKHTTNAVICDGAGAASALETGVAKLGNMEAVQFHPTALVPSGILMTEGCRGDGGVLRDKFGRRFMPAYEPEKKELASRDVVSRRILEHIQKGYGAKSPYGDHVWLDIAILGRNHVEKNLRDVRDIAMTFAGIDPADSEEQTKDNMQGAPTNEPEYGQAMAKQKGWIPIKPMQHYSMGGVRTNPKGETHLKGLFCAGEAACWDLHGFNRLGGNSVSEPVVAGMIIGDYFASHCLEAQIEINTQKVEAFIKESQDYMHFLLHNEGKEDVYEIRERMKEVMDEKVGVFREGKKLEEALKELQELYARSKNICVKNKVLHNNPELEDAYRTKKMLKLALCITQGALLRTESRGAHTRIDYPKRDDEKWLNRTLASWPSAEQDMPTIEYEELDVMKMEISPDFRGYGKKGNFIPHPKKEERDAEILKTILELEKLGKDRIEVQHALMPFELQEKYKARNMRLEDEEVRARGEHLYSFNVHDLLDQHNANLKGEHHE.

Residues glycine 13–alanine 16, serine 42–serine 44, and glycine 49–glycine 50 contribute to the FAD site. Histidine 43 carries the tele-8alpha-FAD histidine modification. Residues histidine 257 and arginine 273 contribute to the active site. Residues glutamate 420 and serine 436 to valine 437 contribute to the FAD site.

This sequence belongs to the FAD-dependent oxidoreductase 2 family. FRD/SDH subfamily. As to quaternary structure, part of an enzyme complex containing three subunits: a flavoprotein (frdA), an iron-sulfur protein (frdB), and diheme cytochrome b (frdC). FAD is required as a cofactor.

It is found in the cell inner membrane. The enzyme catalyses a quinone + succinate = fumarate + a quinol. Its function is as follows. The fumarate reductase enzyme complex is required for fumarate respiration. In Helicobacter pylori (strain J99 / ATCC 700824) (Campylobacter pylori J99), this protein is Fumarate reductase flavoprotein subunit (frdA).